A 601-amino-acid chain; its full sequence is Elongation factor 4 (601 aa).

Residues 6 to 188 (KNIRNFSIIA…QIIKKIPAPD (183 aa)) enclose the tr-type G domain. GTP is bound by residues 18–23 (DHGKST) and 135–138 (NKID).

This sequence belongs to the TRAFAC class translation factor GTPase superfamily. Classic translation factor GTPase family. LepA subfamily.

Its subcellular location is the cell membrane. It catalyses the reaction GTP + H2O = GDP + phosphate + H(+). Its function is as follows. Required for accurate and efficient protein synthesis under certain stress conditions. May act as a fidelity factor of the translation reaction, by catalyzing a one-codon backward translocation of tRNAs on improperly translocated ribosomes. Back-translocation proceeds from a post-translocation (POST) complex to a pre-translocation (PRE) complex, thus giving elongation factor G a second chance to translocate the tRNAs correctly. Binds to ribosomes in a GTP-dependent manner. This is Elongation factor 4 from Buchnera aphidicola subsp. Schizaphis graminum (strain Sg).